Reading from the N-terminus, the 290-residue chain is 4-hydroxy-tetrahydrodipicolinate synthase (290 aa).

T44 provides a ligand contact to pyruvate. The active-site Proton donor/acceptor is the Y132. Residue K160 is the Schiff-base intermediate with substrate of the active site. I202 lines the pyruvate pocket.

This sequence belongs to the DapA family. Homotetramer; dimer of dimers.

The protein resides in the cytoplasm. It carries out the reaction L-aspartate 4-semialdehyde + pyruvate = (2S,4S)-4-hydroxy-2,3,4,5-tetrahydrodipicolinate + H2O + H(+). Its pathway is amino-acid biosynthesis; L-lysine biosynthesis via DAP pathway; (S)-tetrahydrodipicolinate from L-aspartate: step 3/4. Its function is as follows. Catalyzes the condensation of (S)-aspartate-beta-semialdehyde [(S)-ASA] and pyruvate to 4-hydroxy-tetrahydrodipicolinate (HTPA). This Ruegeria pomeroyi (strain ATCC 700808 / DSM 15171 / DSS-3) (Silicibacter pomeroyi) protein is 4-hydroxy-tetrahydrodipicolinate synthase.